The primary structure comprises 306 residues: Palmitoyl-protein thioesterase 1 (306 aa).

The first 27 residues, 1 to 27, serve as a signal peptide directing secretion; the sequence is MASPGCLWLLAVALLPWTCASRALQHL. Cys-6 carries the S-palmitoyl cysteine; by ZDHHC3 and ZDHHC7 lipid modification. Cystine bridges form between Cys-45–Cys-46, Cys-96–Cys-128, and Cys-152–Cys-160. Ser-115 is an active-site residue. 3 N-linked (GlcNAc...) asparagine glycosylation sites follow: Asn-197, Asn-212, and Asn-232. Residues Asp-233 and His-289 contribute to the active site.

The protein belongs to the palmitoyl-protein thioesterase family. Interacts with CLN5. Interacts with ATP5F1A and ATP5F1B. Post-translationally, glycosylated.

The protein localises to the lysosome. Its subcellular location is the secreted. It localises to the golgi apparatus. It is found in the endoplasmic reticulum. The catalysed reaction is S-hexadecanoyl-L-cysteinyl-[protein] + H2O = L-cysteinyl-[protein] + hexadecanoate + H(+). It carries out the reaction hexadecanoyl-CoA + H2O = hexadecanoate + CoA + H(+). The enzyme catalyses S-hexadecanoyl-N-acetylcysteamine + H2O = N-acetylcysteamine + hexadecanoate + H(+). It catalyses the reaction S-hexadecanoyl-N-acetylcysteine methyl ester + H2O = N-acetylcysteine methyl ester + hexadecanoate + H(+). With respect to regulation, palmitoylation reduces PPT1 enzymatic activity. Has thioesterase activity against fatty acid thioesters with 14 -18 carbons, including palmitoyl-CoA, S-palmitoyl-N-acetylcysteamine, and palmitoylated proteins. In contrast to PPT2, PPT1 can hydrolyze palmitoylated proteins and palmitoylcysteine. The chain is Palmitoyl-protein thioesterase 1 (PPT1) from Homo sapiens (Human).